A 569-amino-acid chain; its full sequence is Thiol:disulfide interchange protein DsbD (569 aa).

The first 19 residues, 1-19 (MAQRILTLILLLCSTSAFA), serve as a signal peptide directing secretion. Intrachain disulfides connect Cys122–Cys128 and Cys187–Cys309. 7 consecutive transmembrane segments (helical) span residues 168 to 188 (LPFSALWALLIGIGIAFTPCV), 213 to 233 (LLTFIYVQGMALTYTALGLVV), 248 to 268 (YVLIGLALVFTLLALSMFGLF), 301 to 321 (IAGLICSPCTTAPLSAILLYI), 328 to 348 (WLGGGTLYLYALGMGLPLILI), 362 to 382 (WMEHVKTAFGFVILALPVFLL), and 391 to 411 (GLRLWSLLGVAFFGWAFITSL). One can recognise a Thioredoxin domain in the interval 430 to 569 (LVSVRPLQDW…FSAHLRDRQP (140 aa)). Cys484 and Cys487 are oxidised to a cystine.

It belongs to the thioredoxin family. DsbD subfamily.

The protein localises to the cell inner membrane. The enzyme catalyses [protein]-dithiol + NAD(+) = [protein]-disulfide + NADH + H(+). The catalysed reaction is [protein]-dithiol + NADP(+) = [protein]-disulfide + NADPH + H(+). Its function is as follows. Required to facilitate the formation of correct disulfide bonds in some periplasmic proteins and for the assembly of the periplasmic c-type cytochromes. Acts by transferring electrons from cytoplasmic thioredoxin to the periplasm. This transfer involves a cascade of disulfide bond formation and reduction steps. The protein is Thiol:disulfide interchange protein DsbD of Citrobacter koseri (strain ATCC BAA-895 / CDC 4225-83 / SGSC4696).